The following is a 495-amino-acid chain: D-hydantoinase/dihydropyrimidinase (495 aa).

Residues histidine 59, histidine 61, and lysine 150 each contribute to the Zn(2+) site. At lysine 150 the chain carries N6-carboxylysine. Tyrosine 155 contributes to the substrate binding site. 2 residues coordinate Zn(2+): histidine 183 and histidine 239. Serine 289 serves as a coordination point for substrate. Aspartate 316 contacts Zn(2+). Asparagine 337 serves as a coordination point for substrate.

This sequence belongs to the metallo-dependent hydrolases superfamily. Hydantoinase/dihydropyrimidinase family. In terms of assembly, homotetramer. The cofactor is Zn(2+). In terms of processing, carboxylation allows a single lysine to coordinate two zinc ions.

The catalysed reaction is 5,6-dihydrouracil + H2O = 3-(carbamoylamino)propanoate + H(+). In terms of biological role, catalyzes the hydrolysis of dihydropyrimidines and of the structurally related DL-5-mono-substituted hydantoins, to produce N-carbamoyl-D-amino acids. This Pseudomonas putida (Arthrobacter siderocapsulatus) protein is D-hydantoinase/dihydropyrimidinase.